Consider the following 162-residue polypeptide: Nucleotide-binding protein SCO4614 (162 aa).

Belongs to the YajQ family.

The protein localises to the cytoplasm. Its subcellular location is the nucleoid. Functionally, nucleotide-binding protein. The polypeptide is Nucleotide-binding protein SCO4614 (Streptomyces coelicolor (strain ATCC BAA-471 / A3(2) / M145)).